The chain runs to 208 residues: MSIVTKALNLVPMVVEQTSRGERAYDIYSRLLKERLIFLVGPIDDHMANVIVAQLLFLEADNPEKDISIYINSPGGVVTAGMAIYDTMQYIKPDVSTICVGQAASMGALLLASGAAGKRYALPNSRVMIHQPLGGFQGQATDIDIHAREILTLRSRLNEILAKHTGQSLETIARDTERDNFKSAVDAQAYGLVDQVLERRPEESIQPS.

The Nucleophile role is filled by Ser-105. His-130 is an active-site residue.

It belongs to the peptidase S14 family. In terms of assembly, fourteen ClpP subunits assemble into 2 heptameric rings which stack back to back to give a disk-like structure with a central cavity, resembling the structure of eukaryotic proteasomes.

The protein resides in the cytoplasm. It catalyses the reaction Hydrolysis of proteins to small peptides in the presence of ATP and magnesium. alpha-casein is the usual test substrate. In the absence of ATP, only oligopeptides shorter than five residues are hydrolyzed (such as succinyl-Leu-Tyr-|-NHMec, and Leu-Tyr-Leu-|-Tyr-Trp, in which cleavage of the -Tyr-|-Leu- and -Tyr-|-Trp bonds also occurs).. In terms of biological role, cleaves peptides in various proteins in a process that requires ATP hydrolysis. Has a chymotrypsin-like activity. Plays a major role in the degradation of misfolded proteins. This chain is ATP-dependent Clp protease proteolytic subunit, found in Xanthomonas axonopodis pv. citri (strain 306).